The following is a 164-amino-acid chain: T-cell surface glycoprotein CD3 zeta chain (164 aa).

The first 21 residues, 1–21 (MKWKVSVLACILHVRFPGAEA), serve as a signal peptide directing secretion. The residue at position 22 (Q22) is a Blocked amino end (Gln). Topologically, residues 22 to 30 (QSFGLLDPK) are extracellular. Residues 31–51 (LCYLLDGILFIYGVIITALYL) form a helical membrane-spanning segment. The Cytoplasmic segment spans residues 52 to 164 (RAKFSRSAET…ALHMQTLAPR (113 aa)). Phosphoserine is present on S58. 3 ITAM domains span residues 61–89 (TAAN…LEKK), 100–128 (QQRR…EIGT), and 131–159 (ERRR…LHMQ). Y72 and Y83 each carry phosphotyrosine. Residues 87-96 (EKKRARDPEM) show a composition bias toward basic and acidic residues. A disordered region spans residues 87–111 (EKKRARDPEMGGKQQRRRNPQEGVY). Residues Y111, Y123, Y142, and Y153 each carry the phosphotyrosine modification. The interval 124-143 (SEIGTKGERRRGKGHDGLYQ) is disordered.

This sequence belongs to the CD3Z/FCER1G family. The TCR-CD3 complex is composed of a CD3D/CD3E and a CD3G/CD3E heterodimers that preferentially associate with TCRalpha and TCRbeta, respectively, to form TCRalpha/CD3E/CD3G and TCRbeta/CD3G/CD3E trimers. In turn, the hexamer interacts with CD3Z homodimer to form the TCR-CD3 complex. Alternatively, TCRalpha and TCRbeta can be replaced by TCRgamma and TCRdelta. Interacts with SLA. Interacts with SLA2. Interacts with TRAT1. Interacts with DOCK2. Interacts with SHB. Interacts with ZAP70. Interacts (tyrosine phosphorylated) with SHC1 (via SH2 domain). Interacts with PTPRC. Interacts with CRK; this interaction regulates CD3Z phosphorylation. Interacts (on T cell side) with CD81, ICAM1 and CD9 at immunological synapses between antigen-presenting cells and T cells. Interacts with CD160. Interacts with LY6E. Interacts with LY6E. The signaling subunit of immunoglobulin gamma (IgG) Fc receptor complex. As a homodimer or a heterodimer with FCER1G, associates with the ligand binding subunit FCGR3A (via transmembrane domain); this interaction is a prerequisite for Fc receptor complex expression on the cell surface. Interacts with CD5. Post-translationally, phosphorylated on Tyr residues after T-cell receptor triggering by LCK in association with CD4/CD8. As to expression, CD3Z is expressed in normal lymphoid tissue and in peripheral blood mononuclear cells (PBMCs). Expressed also in retinal ganglion cells.

The protein localises to the cell membrane. Part of the TCR-CD3 complex present on T-lymphocyte cell surface that plays an essential role in adaptive immune response. When antigen presenting cells (APCs) activate T-cell receptor (TCR), TCR-mediated signals are transmitted across the cell membrane by the CD3 chains CD3D, CD3E, CD3G and CD3Z. All CD3 chains contain immunoreceptor tyrosine-based activation motifs (ITAMs) in their cytoplasmic domain. Upon TCR engagement, these motifs become phosphorylated by Src family protein tyrosine kinases LCK and FYN, resulting in the activation of downstream signaling pathways. CD3Z ITAMs phosphorylation creates multiple docking sites for the protein kinase ZAP70 leading to ZAP70 phosphorylation and its conversion into a catalytically active enzyme. Plays an important role in intrathymic T-cell differentiation. Additionally, participates in the activity-dependent synapse formation of retinal ganglion cells (RGCs) in both the retina and dorsal lateral geniculate nucleus (dLGN). This Mus musculus (Mouse) protein is T-cell surface glycoprotein CD3 zeta chain (Cd247).